The following is a 219-amino-acid chain: Proteasome subunit beta (219 aa).

The propeptide at 1–14 (MISNSEYHKEYMKG) is removed in mature form; by autocatalysis. The active-site Nucleophile is the Thr-15.

The protein belongs to the peptidase T1B family. The 20S proteasome core is composed of 14 alpha and 14 beta subunits that assemble into four stacked heptameric rings, resulting in a barrel-shaped structure. The two inner rings, each composed of seven catalytic beta subunits, are sandwiched by two outer rings, each composed of seven alpha subunits. The catalytic chamber with the active sites is on the inside of the barrel. Has a gated structure, the ends of the cylinder being occluded by the N-termini of the alpha-subunits. Is capped at one or both ends by the proteasome regulatory ATPase, PAN.

The protein resides in the cytoplasm. The enzyme catalyses Cleavage of peptide bonds with very broad specificity.. Its activity is regulated as follows. The formation of the proteasomal ATPase PAN-20S proteasome complex, via the docking of the C-termini of PAN into the intersubunit pockets in the alpha-rings, triggers opening of the gate for substrate entry. Interconversion between the open-gate and close-gate conformations leads to a dynamic regulation of the 20S proteasome proteolysis activity. Its function is as follows. Component of the proteasome core, a large protease complex with broad specificity involved in protein degradation. This chain is Proteasome subunit beta, found in Methanococcus maripaludis (strain C6 / ATCC BAA-1332).